Consider the following 92-residue polypeptide: Progonadoliberin-1 (92 aa).

A signal peptide spans 1 to 23; the sequence is MEKSRKILVGVLLFTASVAICLA. At glutamine 24 the chain carries Pyrrolidone carboxylic acid. Residue glycine 33 is modified to Glycine amide.

The protein belongs to the GnRH family.

Its subcellular location is the secreted. Stimulates the secretion of gonadotropins. The chain is Progonadoliberin-1 (GNRH1) from Gallus gallus (Chicken).